Reading from the N-terminus, the 603-residue chain is Probable methyltransferase PMT4 (603 aa).

The Cytoplasmic segment spans residues 1-12; the sequence is MKVASVIGLRPR. The chain crosses the membrane as a helical; Signal-anchor for type II membrane protein span at residues 13–33; sequence ISGLLFLTLGVIALITILVPN. The Lumenal portion of the chain corresponds to 34-603; it reads SDSSSTTSTT…LVCQKPLLKK (570 aa). Residues asparagine 96 and asparagine 393 are each glycosylated (N-linked (GlcNAc...) asparagine).

This sequence belongs to the methyltransferase superfamily.

It localises to the endoplasmic reticulum membrane. The protein is Probable methyltransferase PMT4 of Arabidopsis thaliana (Mouse-ear cress).